The chain runs to 62 residues: Large ribosomal subunit protein bL35 (62 aa).

Basic residues predominate over residues 1 to 26; that stretch reads MPKMKTKSGLKKRIKITATGKVKRGN. The disordered stretch occupies residues 1–62; it reads MPKMKTKSGL…SDFKRYKELI (62 aa). The segment covering 53–62 has biased composition (basic and acidic residues); that stretch reads SDFKRYKELI.

Belongs to the bacterial ribosomal protein bL35 family.

The sequence is that of Large ribosomal subunit protein bL35 from Metamycoplasma arthritidis (strain 158L3-1) (Mycoplasma arthritidis).